The primary structure comprises 65 residues: Large ribosomal subunit protein bL35 (65 aa).

Belongs to the bacterial ribosomal protein bL35 family.

The sequence is that of Large ribosomal subunit protein bL35 from Chlorobium phaeovibrioides (strain DSM 265 / 1930) (Prosthecochloris vibrioformis (strain DSM 265)).